A 222-amino-acid chain; its full sequence is Interleukin-12 subunit alpha (222 aa).

A signal peptide spans 1–25; the sequence is MCPLRNLLLVATLVLLNHLDHLSLG. 3 cysteine pairs are disulfide-bonded: Cys-40-Cys-113, Cys-67-Cys-199, and Cys-88-Cys-126. 2 N-linked (GlcNAc...) asparagine glycosylation sites follow: Asn-42 and Asn-96.

The protein belongs to the IL-6 superfamily. As to quaternary structure, heterodimer with IL12B; disulfide-linked. This heterodimer is known as interleukin IL-12. Heterodimer with EBI3/IL27B; not disulfide-linked. This heterodimer is known as interleukin IL-35. Interacts with NBR1; this interaction promotes IL-12 secretion.

It localises to the secreted. In terms of biological role, heterodimerizes with IL12B to form the IL-12 cytokine or with EBI3/IL27B to form the IL-35 cytokine. IL-12 is primarily produced by professional antigen-presenting cells (APCs) such as B-cells and dendritic cells (DCs) as well as macrophages and granulocytes and regulates T-cell and natural killer-cell responses, induces the production of interferon-gamma (IFN-gamma), favors the differentiation of T-helper 1 (Th1) cells and is an important link between innate resistance and adaptive immunity. Mechanistically, exerts its biological effects through a receptor composed of IL12R1 and IL12R2 subunits. Binding to the receptor results in the rapid tyrosine phosphorylation of a number of cellular substrates including the JAK family kinases TYK2 and JAK2. In turn, recruited STAT4 gets phosphorylated and translocates to the nucleus where it regulates cytokine/growth factor responsive genes. As part of IL-35, plays essential roles in maintaining the immune homeostasis of the liver microenvironment and also functions as an immune-suppressive cytokine. Mediates biological events through unconventional receptors composed of IL12RB2 and gp130/IL6ST heterodimers or homodimers. Signaling requires the transcription factors STAT1 and STAT4, which form a unique heterodimer that binds to distinct DNA sites. This chain is Interleukin-12 subunit alpha (IL12A), found in Sus scrofa (Pig).